The chain runs to 697 residues: Putative cryptochrome DASH (697 aa).

In terms of domain architecture, Photolyase/cryptochrome alpha/beta spans K5 to Y164. Disordered stretches follow at residues D170 to W215 and F554 to I697. Positions K188–R198 are enriched in basic and acidic residues. Basic residues predominate over residues R560–R569. Residues G578 to S590 are compositionally biased toward gly residues. Composition is skewed to low complexity over residues Q659–Q675 and R683–I697.

It belongs to the DNA photolyase class-1 family. The cofactor is FAD. (6R)-5,10-methylene-5,6,7,8-tetrahydrofolate serves as cofactor.

Functionally, may have a photoreceptor function. The polypeptide is Putative cryptochrome DASH (Gibberella zeae (strain ATCC MYA-4620 / CBS 123657 / FGSC 9075 / NRRL 31084 / PH-1) (Wheat head blight fungus)).